The sequence spans 249 residues: ATP synthase subunit a (249 aa).

Helical transmembrane passes span 30 to 50 (SAYM…GSAG), 84 to 104 (FFPL…VGII), 113 to 133 (HIIV…IYGF), 143 to 163 (IFVP…IEVF), 196 to 216 (LLAG…GMVV), and 221 to 241 (LELL…CIYL).

The protein belongs to the ATPase A chain family. As to quaternary structure, F-type ATPases have 2 components, CF(1) - the catalytic core - and CF(0) - the membrane proton channel. CF(1) has five subunits: alpha(3), beta(3), gamma(1), delta(1), epsilon(1). CF(0) has four main subunits: a, b, b' and c.

It is found in the cell inner membrane. Its function is as follows. Key component of the proton channel; it plays a direct role in the translocation of protons across the membrane. This chain is ATP synthase subunit a, found in Rhodopseudomonas palustris (strain BisA53).